The sequence spans 325 residues: 6-phosphogluconolactonase 3, chloroplastic (325 aa).

The N-terminal 68 residues, 1 to 68 (MASSSCFLRS…KSSDTRRKVK (68 aa)), are a transit peptide targeting the chloroplast. The interval 51–73 (SIGTGSTKKSSDTRRKVKSMATT) is disordered. A Microbody targeting signal motif is present at residues 323–325 (SKL).

This sequence belongs to the glucosamine/galactosamine-6-phosphate isomerase family. 6-phosphogluconolactonase subfamily. As to quaternary structure, interacts with TRXM2. Expressed in roots, leaves and shoots.

It is found in the plastid. The protein localises to the chloroplast. It localises to the peroxisome. The catalysed reaction is 6-phospho-D-glucono-1,5-lactone + H2O = 6-phospho-D-gluconate + H(+). It functions in the pathway carbohydrate degradation; pentose phosphate pathway; D-ribulose 5-phosphate from D-glucose 6-phosphate (oxidative stage): step 2/3. In terms of biological role, catalyzes the hydrolysis of 6-phosphogluconolactone to 6-phosphogluconate. Involved in the regulation of cellular redox state; enzymatic activity is required for this function. Required for sugar-dependent expression of nitrate assimilation genes in the nucleus of root cells. The protein is 6-phosphogluconolactonase 3, chloroplastic of Arabidopsis thaliana (Mouse-ear cress).